The following is a 598-amino-acid chain: F-box/WD repeat-containing protein 8 (598 aa).

Met-1 carries the post-translational modification N-acetylmethionine. Residues 17–93 (LAQAQAPKKR…RSPLAREGAG (77 aa)) are disordered. Positions 29-40 (PEAAERRARRPE) are enriched in basic and acidic residues. The segment covering 61–71 (EGAGRPPAARA) has biased composition (low complexity). Phosphoserine occurs at positions 83 and 85. One can recognise an F-box domain in the interval 113–159 (PFFDIQLPYELAINIFQYLDRKELGRCAQVSKTWKVIAEDEVLWYRL). WD repeat units lie at residues 201-250 (AVSE…LESE), 259-299 (QPNV…FEHD), 300-340 (ARIQ…AEFE), 341-383 (VPKL…LLYA), 384-429 (HGPP…LKLG), 430-475 (NVLR…SAHQ), 476-513 (LRVSAVQMDDWKIVSGGEEGLVSVWDYRMNQKLWEVYS), and 514-561 (GHPV…AYEF).

As to quaternary structure, component of the Cul7-RING(FBXW8) complex consisting of CUL7, RBX1, SKP1 and FBXW8; within the complex interacts with CUL7 and SKP1. Interacts with GLMN isoform 1. Interacts with OBSL1, CUL1, CUL2, CCT6B, PFDN5, CCT2, CCT3, CCT6A, CCT7, VBP1, CCDC8, ARF1, TRIP13, PDCD5 and GORASP1. Interacts with MAP4K1/HPK1 (when autophosphorylated). Associated component of the 3M complex. Interacts with POUF51 (when phosphorylated on 'Ser-355'). Post-translationally, phosphorylation at Ser-85 by mTORC2 promotes FBXW8 stabilization, allowing its translocation to the cytosol in response to insulin.

It is found in the cytoplasm. Its subcellular location is the perinuclear region. The protein localises to the golgi apparatus. It functions in the pathway protein modification; protein ubiquitination. Substrate-recognition component of the Cul7-RING(FBXW8) ubiquitin ligase complex, which mediates the ubiquitination and subsequent proteasomal degradation of target proteins. The Cul7-RING(FBXW8) complex mediates ubiquitination and consequent degradation of GORASP1, acting as a component of the ubiquitin ligase pathway that regulates Golgi morphogenesis and dendrite patterning in brain. Mediates ubiquitination and degradation of IRS1 in a mTOR-dependent manner: the Cul7-RING(FBXW8) complex recognizes and binds IRS1 previously phosphorylated by S6 kinase (RPS6KB1 or RPS6KB2). The Cul7-RING(FBXW8) complex also mediates ubiquitination of MAP4K1/HPK1: recognizes and binds autophosphorylated MAP4K1/HPK1, leading to its degradation, thereby affecting cell proliferation and differentiation. The Cul7-RING(FBXW8) complex also mediates ubiquitination of phosphorylated cyclin-D1 (CCND1). The Cul7-RING(FBXW8) complex is however not a major regulator of CCND1 stability during the G1/S transition. Associated component of the 3M complex, suggesting that it mediates some of 3M complex functions. This chain is F-box/WD repeat-containing protein 8, found in Homo sapiens (Human).